The following is a 251-amino-acid chain: Cholesterol 25-hydroxylase-like protein (251 aa).

Transmembrane regions (helical) follow at residues 22 to 42 (FFPVLFSITVYLSFCLPFVLL), 69 to 89 (WSCLALSLYNHVVYIFPLSVL), and 108 to 128 (VVWDLAACLLLFDFQYFVWHL). Positions 113 to 247 (AACLLLFDFQ…FTHWDKLFGT (135 aa)) constitute a Fatty acid hydroxylase domain. Positions 126–130 (WHLLH) match the Histidine box-1 motif. The short motif at 141–145 (HKVHH) is the Histidine box-2 element. Residues 222-228 (HHDVHHQ) carry the Histidine box-3 motif.

The protein belongs to the sterol desaturase family. It depends on Fe cation as a cofactor.

It localises to the endoplasmic reticulum membrane. The enzyme catalyses cholesterol + AH2 + O2 = 25-hydroxycholesterol + A + H2O. It catalyses the reaction cholesterol + NADPH + O2 + H(+) = 25-hydroxycholesterol + NADP(+) + H2O. Catalyzes the formation of 25-hydroxycholesterol from cholesterol, leading to repress cholesterol biosynthetic enzymes. Plays a key role in cell positioning and movement in lymphoid tissues: 25-hydroxycholesterol is an intermediate in biosynthesis of 7-alpha,25-dihydroxycholesterol (7-alpha,25-OHC), an oxysterol that acts as a ligand for the G protein-coupled receptor GPR183/EBI2, a chemotactic receptor for a number of lymphoid cells. May play an important role in regulating lipid metabolism by synthesizing a corepressor that blocks sterol regulatory element binding protein (SREBP) processing. In testis, production of 25-hydroxycholesterol by macrophages may play a role in Leydig cell differentiation. In Danio rerio (Zebrafish), this protein is Cholesterol 25-hydroxylase-like protein (ch25h).